Reading from the N-terminus, the 90-residue chain is MAHKKAGGSSRNGRDSHGKRLGIKAFGGEHVIPGNIIARQRGTTWHPGLNVGMGTDHTLFAKVEGHVAFRVKTGGRTFVSVLPMTEAAAE.

A disordered region spans residues 1-21 (MAHKKAGGSSRNGRDSHGKRL).

It belongs to the bacterial ribosomal protein bL27 family.

The sequence is that of Large ribosomal subunit protein bL27 from Nitrobacter winogradskyi (strain ATCC 25391 / DSM 10237 / CIP 104748 / NCIMB 11846 / Nb-255).